A 381-amino-acid chain; its full sequence is Succinyl-diaminopimelate desuccinylase (381 aa).

His-69 contacts Zn(2+). The active site involves Asp-71. Residue Asp-103 participates in Zn(2+) binding. Catalysis depends on Glu-137, which acts as the Proton acceptor. Zn(2+) is bound by residues Glu-138, Glu-166, and His-355.

The protein belongs to the peptidase M20A family. DapE subfamily. In terms of assembly, homodimer. It depends on Zn(2+) as a cofactor. Co(2+) serves as cofactor.

It catalyses the reaction N-succinyl-(2S,6S)-2,6-diaminopimelate + H2O = (2S,6S)-2,6-diaminopimelate + succinate. Its pathway is amino-acid biosynthesis; L-lysine biosynthesis via DAP pathway; LL-2,6-diaminopimelate from (S)-tetrahydrodipicolinate (succinylase route): step 3/3. In terms of biological role, catalyzes the hydrolysis of N-succinyl-L,L-diaminopimelic acid (SDAP), forming succinate and LL-2,6-diaminopimelate (DAP), an intermediate involved in the bacterial biosynthesis of lysine and meso-diaminopimelic acid, an essential component of bacterial cell walls. The polypeptide is Succinyl-diaminopimelate desuccinylase (Rickettsia akari (strain Hartford)).